Reading from the N-terminus, the 366-residue chain is MEGNLIKINKWLYPVSWIYGTGVWLRNKLFDWGIYKERKFDIPVISVGNITVGGTGKTPHTEYLIRLLQKDYKVAVLSRGYKRKSKGFVLARPDTSVQMIGDEPFQMKQKFPDIHMAVDRDRCHGIEQLCNSHIAPGTEVIILDDAFQHRYVKPGINILLVDYHRLICEDTLLPAGRMREPENGKSRAHIVIVTKCPKDITPMDLRVLSKQMELYPYQQLYFTTLTYGKLHPLFTAGNAVSLKEIEKDKHILLVTGIASPAKLIQDLSPYNEHIESLAFSDHHDFTARDMELIKKRFMKLPEGKRMIITTEKDSVRLAAHPLMDEMLKPYIYMLPIEVAFLQDQQELFNSNITDYVRKNSRNSNFS.

51–58 is a binding site for ATP; sequence TVGGTGKT.

It belongs to the LpxK family.

The catalysed reaction is a lipid A disaccharide + ATP = a lipid IVA + ADP + H(+). The protein operates within glycolipid biosynthesis; lipid IV(A) biosynthesis; lipid IV(A) from (3R)-3-hydroxytetradecanoyl-[acyl-carrier-protein] and UDP-N-acetyl-alpha-D-glucosamine: step 6/6. Functionally, transfers the gamma-phosphate of ATP to the 4'-position of a tetraacyldisaccharide 1-phosphate intermediate (termed DS-1-P) to form tetraacyldisaccharide 1,4'-bis-phosphate (lipid IVA). The chain is Tetraacyldisaccharide 4'-kinase from Phocaeicola vulgatus (strain ATCC 8482 / DSM 1447 / JCM 5826 / CCUG 4940 / NBRC 14291 / NCTC 11154) (Bacteroides vulgatus).